A 272-amino-acid polypeptide reads, in one-letter code: Phosphatidylglycerol--prolipoprotein diacylglyceryl transferase (272 aa).

7 helical membrane-spanning segments follow: residues 17-37 (LAIR…LGFG), 59-79 (MLFF…VLFY), 95-115 (WEGG…MWLF), 129-149 (FIAP…FING), 176-196 (SQLY…WLFA), 202-222 (MGAV…AAEF), and 237-257 (LSMG…MVVW). Residue Arg-142 coordinates a 1,2-diacyl-sn-glycero-3-phospho-(1'-sn-glycerol).

The protein belongs to the Lgt family.

The protein resides in the cell inner membrane. The catalysed reaction is L-cysteinyl-[prolipoprotein] + a 1,2-diacyl-sn-glycero-3-phospho-(1'-sn-glycerol) = an S-1,2-diacyl-sn-glyceryl-L-cysteinyl-[prolipoprotein] + sn-glycerol 1-phosphate + H(+). It functions in the pathway protein modification; lipoprotein biosynthesis (diacylglyceryl transfer). Functionally, catalyzes the transfer of the diacylglyceryl group from phosphatidylglycerol to the sulfhydryl group of the N-terminal cysteine of a prolipoprotein, the first step in the formation of mature lipoproteins. In Cupriavidus necator (strain ATCC 17699 / DSM 428 / KCTC 22496 / NCIMB 10442 / H16 / Stanier 337) (Ralstonia eutropha), this protein is Phosphatidylglycerol--prolipoprotein diacylglyceryl transferase.